Reading from the N-terminus, the 198-residue chain is Large ribosomal subunit protein bL21 (198 aa).

It belongs to the bacterial ribosomal protein bL21 family. In terms of assembly, part of the 50S ribosomal subunit. Contacts protein L20.

Functionally, this protein binds to 23S rRNA in the presence of protein L20. In Ruegeria sp. (strain TM1040) (Silicibacter sp.), this protein is Large ribosomal subunit protein bL21.